Consider the following 275-residue polypeptide: Dermonecrotic toxin LamSicTox-alphaIV1ii (275 aa).

The active site involves His-5. Positions 25 and 27 each coordinate Mg(2+). The Nucleophile role is filled by His-41. Intrachain disulfides connect Cys-45-Cys-51 and Cys-47-Cys-192. A Mg(2+)-binding site is contributed by Asp-85.

It belongs to the arthropod phospholipase D family. Class II subfamily. Mg(2+) is required as a cofactor. Expressed by the venom gland.

Its subcellular location is the secreted. The catalysed reaction is an N-(acyl)-sphingosylphosphocholine = an N-(acyl)-sphingosyl-1,3-cyclic phosphate + choline. It carries out the reaction an N-(acyl)-sphingosylphosphoethanolamine = an N-(acyl)-sphingosyl-1,3-cyclic phosphate + ethanolamine. It catalyses the reaction a 1-acyl-sn-glycero-3-phosphocholine = a 1-acyl-sn-glycero-2,3-cyclic phosphate + choline. The enzyme catalyses a 1-acyl-sn-glycero-3-phosphoethanolamine = a 1-acyl-sn-glycero-2,3-cyclic phosphate + ethanolamine. In terms of biological role, dermonecrotic toxins cleave the phosphodiester linkage between the phosphate and headgroup of certain phospholipids (sphingolipid and lysolipid substrates), forming an alcohol (often choline) and a cyclic phosphate. This toxin acts on sphingomyelin (SM). It may also act on ceramide phosphoethanolamine (CPE), lysophosphatidylcholine (LPC) and lysophosphatidylethanolamine (LPE), but not on lysophosphatidylserine (LPS), and lysophosphatidylglycerol (LPG). It acts by transphosphatidylation, releasing exclusively cyclic phosphate products as second products. Induces dermonecrosis, hemolysis, increased vascular permeability, edema, inflammatory response, and platelet aggregation. The polypeptide is Dermonecrotic toxin LamSicTox-alphaIV1ii (Loxosceles amazonica (Recluse spider)).